Consider the following 334-residue polypeptide: GTPase Obg (334 aa).

An Obg domain is found at 4–162 (FDFIDEVKKY…GWIKLELKLL (159 aa)). The 168-residue stretch at 163 to 330 (AEVGLVGFPN…FKDKIWKLLH (168 aa)) folds into the OBG-type G domain. Residues 169–176 (GFPNAGKS), 194–198 (FTTLV), 216–219 (DMPG), 284–287 (SKLD), and 311–313 (SSV) each bind GTP. 2 residues coordinate Mg(2+): Ser-176 and Thr-196.

It belongs to the TRAFAC class OBG-HflX-like GTPase superfamily. OBG GTPase family. As to quaternary structure, monomer. The cofactor is Mg(2+).

The protein localises to the cytoplasm. Its function is as follows. An essential GTPase which binds GTP, GDP and possibly (p)ppGpp with moderate affinity, with high nucleotide exchange rates and a fairly low GTP hydrolysis rate. Plays a role in control of the cell cycle, stress response, ribosome biogenesis and in those bacteria that undergo differentiation, in morphogenesis control. This Amoebophilus asiaticus (strain 5a2) protein is GTPase Obg.